Consider the following 230-residue polypeptide: Large ribosomal subunit protein uL1 (230 aa).

It belongs to the universal ribosomal protein uL1 family. As to quaternary structure, part of the 50S ribosomal subunit.

In terms of biological role, binds directly to 23S rRNA. The L1 stalk is quite mobile in the ribosome, and is involved in E site tRNA release. Protein L1 is also a translational repressor protein, it controls the translation of the L11 operon by binding to its mRNA. In Sulfurimonas denitrificans (strain ATCC 33889 / DSM 1251) (Thiomicrospira denitrificans (strain ATCC 33889 / DSM 1251)), this protein is Large ribosomal subunit protein uL1.